Reading from the N-terminus, the 513-residue chain is GMP synthase [glutamine-hydrolyzing] (513 aa).

The Glutamine amidotransferase type-1 domain occupies 8–198 (KIIVLDYGSQ…ALNICGAKGN (191 aa)). The Nucleophile role is filled by cysteine 85. Catalysis depends on residues histidine 172 and glutamate 174. The GMPS ATP-PPase domain occupies 199–388 (WSMENFIDMQ…LGMPDEIVWR (190 aa)). 226-232 (SGGVDSS) lines the ATP pocket.

In terms of assembly, homodimer.

It catalyses the reaction XMP + L-glutamine + ATP + H2O = GMP + L-glutamate + AMP + diphosphate + 2 H(+). The protein operates within purine metabolism; GMP biosynthesis; GMP from XMP (L-Gln route): step 1/1. In terms of biological role, catalyzes the synthesis of GMP from XMP. This chain is GMP synthase [glutamine-hydrolyzing] (guaA), found in Lactococcus lactis subsp. cremoris (strain MG1363).